The sequence spans 284 residues: Tegument protein UL23 (284 aa).

It belongs to the herpesviridae US22 family. Interacts with host NMI; this interaction inhibits NMI interaction with STAT1.

It is found in the virion tegument. The protein resides in the host cytoplasm. Plays a role in the inhibition of host innate immune response by disrupting the interaction between NMI and STAT1. In turn, NMI-mediated transcription of interferon-gamma stimulated genes is inhibited. This is Tegument protein UL23 (UL23) from Homo sapiens (Human).